Here is a 265-residue protein sequence, read N- to C-terminus: Tryptophan 2,3-dioxygenase (265 aa).

Substrate contacts are provided by residues 38-42 and arginine 104; that span reads FIVVH. Histidine 223 contributes to the heme binding site. Threonine 237 is a substrate binding site.

Belongs to the tryptophan 2,3-dioxygenase family. As to quaternary structure, homotetramer. Heme serves as cofactor.

The catalysed reaction is L-tryptophan + O2 = N-formyl-L-kynurenine. Its pathway is amino-acid degradation; L-tryptophan degradation via kynurenine pathway; L-kynurenine from L-tryptophan: step 1/2. Heme-dependent dioxygenase that catalyzes the oxidative cleavage of the L-tryptophan (L-Trp) pyrrole ring and converts L-tryptophan to N-formyl-L-kynurenine. Catalyzes the oxidative cleavage of the indole moiety. The polypeptide is Tryptophan 2,3-dioxygenase (Anaeromyxobacter dehalogenans (strain 2CP-C)).